A 521-amino-acid chain; its full sequence is Anthranilate synthase component 1 (521 aa).

Residues T40 and 292–294 (PYM) contribute to the L-tryptophan site. 329 to 330 (GT) is a chorismate binding site. E362 serves as a coordination point for Mg(2+). Residues Y450, R470, 484-486 (GAG), and G486 each bind chorismate. Residue E499 participates in Mg(2+) binding.

The protein belongs to the anthranilate synthase component I family. As to quaternary structure, heterotetramer consisting of two non-identical subunits: a beta subunit (TrpG) and a large alpha subunit (TrpE). Mg(2+) serves as cofactor.

The catalysed reaction is chorismate + L-glutamine = anthranilate + pyruvate + L-glutamate + H(+). It participates in amino-acid biosynthesis; L-tryptophan biosynthesis; L-tryptophan from chorismate: step 1/5. Feedback inhibited by tryptophan. Its function is as follows. Part of a heterotetrameric complex that catalyzes the two-step biosynthesis of anthranilate, an intermediate in the biosynthesis of L-tryptophan. In the first step, the glutamine-binding beta subunit (TrpG) of anthranilate synthase (AS) provides the glutamine amidotransferase activity which generates ammonia as a substrate that, along with chorismate, is used in the second step, catalyzed by the large alpha subunit of AS (TrpE) to produce anthranilate. In the absence of TrpG, TrpE can synthesize anthranilate directly from chorismate and high concentrations of ammonia. The protein is Anthranilate synthase component 1 (trpE) of Buchnera aphidicola subsp. Acyrthosiphon pisum (strain APS) (Acyrthosiphon pisum symbiotic bacterium).